The primary structure comprises 110 residues: Large ribosomal subunit protein uL22 (110 aa).

This sequence belongs to the universal ribosomal protein uL22 family. Part of the 50S ribosomal subunit.

Functionally, this protein binds specifically to 23S rRNA; its binding is stimulated by other ribosomal proteins, e.g. L4, L17, and L20. It is important during the early stages of 50S assembly. It makes multiple contacts with different domains of the 23S rRNA in the assembled 50S subunit and ribosome. The globular domain of the protein is located near the polypeptide exit tunnel on the outside of the subunit, while an extended beta-hairpin is found that lines the wall of the exit tunnel in the center of the 70S ribosome. In Marinobacter nauticus (strain ATCC 700491 / DSM 11845 / VT8) (Marinobacter aquaeolei), this protein is Large ribosomal subunit protein uL22.